The primary structure comprises 250 residues: 4-hydroxy-tetrahydrodipicolinate reductase (250 aa).

NAD(+) is bound by residues 10-15, 78-80, and 105-108; these read GVKGRI, GTT, and APNF. His135 serves as the catalytic Proton donor/acceptor. His136 lines the (S)-2,3,4,5-tetrahydrodipicolinate pocket. Residue Lys139 is the Proton donor of the active site. (S)-2,3,4,5-tetrahydrodipicolinate is bound at residue 145–146; that stretch reads GT.

This sequence belongs to the DapB family.

It localises to the cytoplasm. It catalyses the reaction (S)-2,3,4,5-tetrahydrodipicolinate + NAD(+) + H2O = (2S,4S)-4-hydroxy-2,3,4,5-tetrahydrodipicolinate + NADH + H(+). The catalysed reaction is (S)-2,3,4,5-tetrahydrodipicolinate + NADP(+) + H2O = (2S,4S)-4-hydroxy-2,3,4,5-tetrahydrodipicolinate + NADPH + H(+). The protein operates within amino-acid biosynthesis; L-lysine biosynthesis via DAP pathway; (S)-tetrahydrodipicolinate from L-aspartate: step 4/4. Its function is as follows. Catalyzes the conversion of 4-hydroxy-tetrahydrodipicolinate (HTPA) to tetrahydrodipicolinate. In Streptomyces avermitilis (strain ATCC 31267 / DSM 46492 / JCM 5070 / NBRC 14893 / NCIMB 12804 / NRRL 8165 / MA-4680), this protein is 4-hydroxy-tetrahydrodipicolinate reductase.